Reading from the N-terminus, the 148-residue chain is Cytochrome c-type biogenesis protein CcmE (148 aa).

At 1–7 the chain is on the cytoplasmic side; it reads MKPRNRR. A helical; Signal-anchor for type II membrane protein membrane pass occupies residues 8 to 28; sequence IALIVAGLSALGIATALVLNA. At 29–148 the chain is on the periplasmic side; sequence FQSNLVFFFT…VQKKPASRKP (120 aa). 2 residues coordinate heme: H123 and Y127. Positions 128 to 148 are disordered; sequence MPPEAQHALDEVQKKPASRKP.

This sequence belongs to the CcmE/CycJ family.

It is found in the cell inner membrane. Its function is as follows. Heme chaperone required for the biogenesis of c-type cytochromes. Transiently binds heme delivered by CcmC and transfers the heme to apo-cytochromes in a process facilitated by CcmF and CcmH. The chain is Cytochrome c-type biogenesis protein CcmE from Pseudomonas aeruginosa.